The following is a 120-amino-acid chain: ATP-dependent Clp protease adapter protein ClpS (120 aa).

A disordered region spans residues Met-1–Gly-25.

It belongs to the ClpS family. In terms of assembly, binds to the N-terminal domain of the chaperone ClpA.

Involved in the modulation of the specificity of the ClpAP-mediated ATP-dependent protein degradation. The protein is ATP-dependent Clp protease adapter protein ClpS of Pseudomonas putida (strain W619).